Consider the following 416-residue polypeptide: UDP-N-acetylmuramoylalanine--D-glutamate ligase (416 aa).

Residue 108 to 114 (GTTGKTT) participates in ATP binding.

This sequence belongs to the MurCDEF family.

It is found in the cytoplasm. The catalysed reaction is UDP-N-acetyl-alpha-D-muramoyl-L-alanine + D-glutamate + ATP = UDP-N-acetyl-alpha-D-muramoyl-L-alanyl-D-glutamate + ADP + phosphate + H(+). Its pathway is cell wall biogenesis; peptidoglycan biosynthesis. In terms of biological role, cell wall formation. Catalyzes the addition of glutamate to the nucleotide precursor UDP-N-acetylmuramoyl-L-alanine (UMA). In Chlamydia trachomatis serovar L2b (strain UCH-1/proctitis), this protein is UDP-N-acetylmuramoylalanine--D-glutamate ligase.